An 81-amino-acid chain; its full sequence is Large ribosomal subunit protein bL27m (81 aa).

Polar residues predominate over residues 1–11 (MATKKSGGSSR). A disordered region spans residues 1–20 (MATKKSGGSSRNGRDSKGRR).

This sequence belongs to the bacterial ribosomal protein bL27 family.

It is found in the mitochondrion. In Reclinomonas americana, this protein is Large ribosomal subunit protein bL27m (RPL27).